Reading from the N-terminus, the 1175-residue chain is uncharacterized protein (1175 aa).

586-593 (GPAGTGKT) lines the ATP pocket.

This is an uncharacterized protein from Methanocaldococcus jannaschii (strain ATCC 43067 / DSM 2661 / JAL-1 / JCM 10045 / NBRC 100440) (Methanococcus jannaschii).